We begin with the raw amino-acid sequence, 559 residues long: Aspartokinase 3, chloroplastic (559 aa).

The N-terminal 85 residues, 1-85, are a transit peptide targeting the chloroplast; sequence MAASMQFYGV…LNKTEKKLTC (85 aa). 3 residues coordinate ATP: K88, G91, and S120. E204 contributes to the substrate binding site. ACT domains are found at residues 402-480 and 481-559; these read ITST…SIIS and LIGN…AASS.

The protein belongs to the aspartokinase family. In terms of tissue distribution, highly expressed in xylem of leaves and hypocotyls, stele of roots and in trichomes after bolting. Weak expression in veins and mesophyll cells of caulone leaves, inflorescence stems, sepals, petals and stigmata.

The protein resides in the plastid. The protein localises to the chloroplast. The enzyme catalyses L-aspartate + ATP = 4-phospho-L-aspartate + ADP. Its pathway is amino-acid biosynthesis; L-lysine biosynthesis via DAP pathway; (S)-tetrahydrodipicolinate from L-aspartate: step 1/4. It participates in amino-acid biosynthesis; L-methionine biosynthesis via de novo pathway; L-homoserine from L-aspartate: step 1/3. It functions in the pathway amino-acid biosynthesis; L-threonine biosynthesis; L-threonine from L-aspartate: step 1/5. With respect to regulation, allosterically inhibited by lysine, but not by S-adenosyl-L-methionine (SAM). K(0.5) for lysine in the presence of physiological concentrations of substrates is 7.4 uM. No inhibition by threonine or leucine and no activation or inhibition by alanine, cysteine, isoleucine, serine, valine, methionine, glutamine, asparagine, glutamic acid or arginine. Its function is as follows. Involved in the first step of essential amino acids lysine, threonine, methionine and isoleucine synthesis via the aspartate-family pathway. The sequence is that of Aspartokinase 3, chloroplastic (AK3) from Arabidopsis thaliana (Mouse-ear cress).